We begin with the raw amino-acid sequence, 394 residues long: MEAEEPPEARRCCPEALGKARGCCPEALGKLLPGLCFLCCLVTYALVGAALFSAVEGRPDPEAEENPELKKFLDDLCNILKCNLTVVEGSRKNLCEHLQHLKPQWLKAPQDWSFLSALFFCCTVFSTVGYGHMYPVTRLGKFLCMLYALFGIPLMFLVLTDIGDILATILSRAYSRFQALLCLPHDIFKWRSLPLCRKQPDSKPVEEAIPQIVIDAGVDELLNPQPSKDPPSPSCNVELFERLVAREKKNKLQPPTRPVERSNSCPELVLGRLSCSILSNLDEVGQQVERLDIPLPVIALVVFAYISCAAAILPFWETELGFEDAFYFCFVTLTTIGFGDIVLVHPHFFLFFSIYIIVGMEILFIAFKLMQNRLLHTYKTLMLFVCQREVSLPW.

Over 1-31 (MEAEEPPEARRCCPEALGKARGCCPEALGKL) the chain is Cytoplasmic. The chain crosses the membrane as a helical span at residues 32–52 (LPGLCFLCCLVTYALVGAALF). The N-linked (GlcNAc...) asparagine glycan is linked to Asn-83. Residues 114–140 (FLSALFFCCTVFSTVGYGHMYPVTRLG) constitute an intramembrane region (pore-forming). Residues Thr-127, Val-128, Gly-129, and Tyr-130 each coordinate K(+). Residues 127-132 (TVGYGH) form a selectivity filter 1 region. A helical membrane pass occupies residues 142–162 (FLCMLYALFGIPLMFLVLTDI). The Cytoplasmic segment spans residues 163–292 (GDILATILSR…EVGQQVERLD (130 aa)). Residues 210 to 215 (PQIVID) are interaction with calcineurin. The interval 261–266 (RSNSCP) is interaction with YWHAH. Phosphoserine is present on residues Ser-264 and Ser-276. The helical transmembrane segment at 293–313 (IPLPVIALVVFAYISCAAAIL) threads the bilayer. Positions 326–340 (FYFCFVTLTTIGFGD) form an intramembrane region, pore-forming. The selectivity filter 2 stretch occupies residues 335–340 (TIGFGD). The helical transmembrane segment at 347–367 (HFFLFFSIYIIVGMEILFIAF) threads the bilayer. Topologically, residues 368–394 (KLMQNRLLHTYKTLMLFVCQREVSLPW) are cytoplasmic.

Belongs to the two pore domain potassium channel (TC 1.A.1.8) family. Homodimer. Heterodimer with KCNK2. Heterodimer with KCNK10. Interacts with calcineurin. Interacts with YWHAH, in a phosphorylation-dependent manner. Phosphorylation of Ser-264 is required for the binding of 14-3-3eta/YWHAH. Calcineurin-mediated dephosphorylation of Ser-276 enhances channel activity. In terms of processing, N-glycosylated. As to expression, detected in brain cortex, cerebellum, dorsal root ganglion, spinal cord and testis. High expression in trigeminal ganglion (at protein level), also expressed in autonomic nervous system ganglia such as the stellate ganglion and paravertebral sympathetic ganglia. Expressed in all adult spinal cord and brain regions, with slightly higher expression in thalamus, hypothalamus, hippocampus and posterior corte (at protein level). In non-neuronal tissues, substantial expression found in lung and heart and weal expression in liver, testis, kidney, small intestine and spleen. Expressed in regulatory T cells (at protein level).

The protein localises to the cell membrane. The enzyme catalyses K(+)(in) = K(+)(out). Its activity is regulated as follows. Activated upon cell stimulation via Ca(2+)-mobilizing receptors, such as CHRM1/M1 muscarinic receptor and AGTR1/AT1a angiotensin receptor. Activated by volatile anesthetics, such as isoflurane and inhibited by local anesthetics such as bupivacaine and lidocaine. Inhibited by extracellular acidic pH. Inhibited by Zn(2+) ions. Inhibited by hydroxy-alpha-sanshool, an ingredient of Schezuan pepper. Inhibited by Ba(2+) ions. K(+) channel that conducts outward and inward rectifying currents at depolarized and hyperpolarized membrane potentials, respectively. The outward rectifying currents are voltage-dependent, coupled to K(+) electrochemical gradient across the membrane, whereas the inward currents can be induced in response to activation of Ca(2+)-mobilizing receptors. Homo- and heterodimerizes to form functional channels with distinct regulatory and gating properties. In trigeminal ganglia sensory neurons, the heterodimers of KCNK18/TRESK and KCNK2/TREK-1 or KCNK10/TREK-2 inhibit neuronal firing and neurogenic inflammation by stabilizing the resting membrane potential at K(+) equilibrium potential as well as by regulating the threshold of action potentials and the spike frequency. In thymocytes, conducts K(+) currents upon T cell receptor (TCR) signaling leading to sustained Ca(2+) influx and NF-kappa-B activation, FOXP3 transcription and positive selection of regulatory T cell (Treg) progenitor subsets. Appears to mediate the analgesics effects of hydroxy-alpha-sanshool, a metabolite naturally present in Schezuan pepper and other Xanthoxylum plants. This Mus musculus (Mouse) protein is Potassium channel subfamily K member 18.